We begin with the raw amino-acid sequence, 88 residues long: Acyl-CoA-binding domain-containing protein 7 (88 aa).

In terms of domain architecture, ACB spans 3–88 (LQADFDRAAE…AKELIEKYGI (86 aa)). Residues R15, 30-34 (YGLYK), K56, and Y75 contribute to the an acyl-CoA site.

Belongs to the ACBD7 family.

Binds medium- and long-chain acyl-CoA esters. In Homo sapiens (Human), this protein is Acyl-CoA-binding domain-containing protein 7 (ACBD7).